Reading from the N-terminus, the 293-residue chain is Pyridoxal 5'-phosphate synthase subunit PdxS (293 aa).

Asp-23 lines the D-ribose 5-phosphate pocket. The active-site Schiff-base intermediate with D-ribose 5-phosphate is the Lys-80. Residue Gly-152 participates in D-ribose 5-phosphate binding. Arg-164 provides a ligand contact to D-glyceraldehyde 3-phosphate. Residues Gly-213 and 234 to 235 (GS) each bind D-ribose 5-phosphate.

This sequence belongs to the PdxS/SNZ family. In terms of assembly, in the presence of PdxT, forms a dodecamer of heterodimers.

It catalyses the reaction aldehydo-D-ribose 5-phosphate + D-glyceraldehyde 3-phosphate + L-glutamine = pyridoxal 5'-phosphate + L-glutamate + phosphate + 3 H2O + H(+). It participates in cofactor biosynthesis; pyridoxal 5'-phosphate biosynthesis. In terms of biological role, catalyzes the formation of pyridoxal 5'-phosphate from ribose 5-phosphate (RBP), glyceraldehyde 3-phosphate (G3P) and ammonia. The ammonia is provided by the PdxT subunit. Can also use ribulose 5-phosphate and dihydroxyacetone phosphate as substrates, resulting from enzyme-catalyzed isomerization of RBP and G3P, respectively. This Methanothermobacter thermautotrophicus (strain ATCC 29096 / DSM 1053 / JCM 10044 / NBRC 100330 / Delta H) (Methanobacterium thermoautotrophicum) protein is Pyridoxal 5'-phosphate synthase subunit PdxS.